The chain runs to 150 residues: Cytochrome c-type biogenesis protein CcmE (150 aa).

Residues 1 to 7 are Cytoplasmic-facing; the sequence is MTRKQKR. Residues 8–28 traverse the membrane as a helical; Signal-anchor for type II membrane protein segment; that stretch reads LAIIGGGVGFLTAAVLLVMFA. At 29–150 the chain is on the periplasmic side; sequence FSQAVAYFYV…VTLGGKENIQ (122 aa). Histidine 123 and tyrosine 127 together coordinate heme.

This sequence belongs to the CcmE/CycJ family.

The protein resides in the cell inner membrane. Heme chaperone required for the biogenesis of c-type cytochromes. Transiently binds heme delivered by CcmC and transfers the heme to apo-cytochromes in a process facilitated by CcmF and CcmH. This chain is Cytochrome c-type biogenesis protein CcmE, found in Sinorhizobium fredii (strain NBRC 101917 / NGR234).